Here is a 260-residue protein sequence, read N- to C-terminus: Proteasome subunit alpha (260 aa).

Residues 231-260 are disordered; the sequence is LLPEDFSPGQTEGGGDPAPESGDSKDAKDN.

This sequence belongs to the peptidase T1A family. In terms of assembly, the 20S proteasome core is composed of 14 alpha and 14 beta subunits that assemble into four stacked heptameric rings, resulting in a barrel-shaped structure. The two inner rings, each composed of seven catalytic beta subunits, are sandwiched by two outer rings, each composed of seven alpha subunits. The catalytic chamber with the active sites is on the inside of the barrel. Has a gated structure, the ends of the cylinder being occluded by the N-termini of the alpha-subunits. Is capped by the proteasome-associated ATPase, ARC.

It is found in the cytoplasm. It functions in the pathway protein degradation; proteasomal Pup-dependent pathway. Its activity is regulated as follows. The formation of the proteasomal ATPase ARC-20S proteasome complex, likely via the docking of the C-termini of ARC into the intersubunit pockets in the alpha-rings, may trigger opening of the gate for substrate entry. Interconversion between the open-gate and close-gate conformations leads to a dynamic regulation of the 20S proteasome proteolysis activity. Functionally, component of the proteasome core, a large protease complex with broad specificity involved in protein degradation. The chain is Proteasome subunit alpha from Mycobacteroides abscessus (strain ATCC 19977 / DSM 44196 / CCUG 20993 / CIP 104536 / JCM 13569 / NCTC 13031 / TMC 1543 / L948) (Mycobacterium abscessus).